The primary structure comprises 95 residues: Histone-like DNA-binding protein (95 aa).

Belongs to the bacterial histone-like protein family.

The sequence is that of Histone-like DNA-binding protein from Rickettsia rickettsii.